The primary structure comprises 176 residues: uncharacterized protein (176 aa).

The protein belongs to the mimivirus R160 family.

This is an uncharacterized protein from Acanthamoeba polyphaga mimivirus (APMV).